Here is a 307-residue protein sequence, read N- to C-terminus: Probable acetylxylan esterase A (307 aa).

Positions 1 to 19 are cleaved as a signal peptide; that stretch reads MILLSYLLTYLLCALTCSA. The active-site Charge relay system is the Ser150. 2 N-linked (GlcNAc...) asparagine glycosylation sites follow: Asn192 and Asn270.

This sequence belongs to the carbohydrate esterase 1 (CE1) family. AxeA subfamily. As to quaternary structure, monomer.

The protein localises to the secreted. It carries out the reaction Deacetylation of xylans and xylo-oligosaccharides.. It participates in glycan degradation; xylan degradation. Acetylxylan esterase involved in the hydrolysis of xylan, a major structural heterogeneous polysaccharide found in plant biomass representing the second most abundant polysaccharide in the biosphere, after cellulose. Degrades acetylated xylans by cleaving acetyl side groups from the hetero-xylan backbone. This chain is Probable acetylxylan esterase A (axeA), found in Aspergillus flavus (strain ATCC 200026 / FGSC A1120 / IAM 13836 / NRRL 3357 / JCM 12722 / SRRC 167).